The sequence spans 202 residues: Holliday junction branch migration complex subunit RuvA (202 aa).

The segment at 1-64 (MISRLRGTVL…EDAFDLFGFL (64 aa)) is domain I. The tract at residues 65–143 (TKGEEEVFLL…TIHLEAVSRG (79 aa)) is domain II. Residues 143–147 (GTAPA) are flexible linker. The segment at 148–202 (AVSGAHADLVSALLNLGYKQPQAEKAADLASERLGAEATFQALFREALKALRSGG) is domain III.

It belongs to the RuvA family. Homotetramer. Forms an RuvA(8)-RuvB(12)-Holliday junction (HJ) complex. HJ DNA is sandwiched between 2 RuvA tetramers; dsDNA enters through RuvA and exits via RuvB. An RuvB hexamer assembles on each DNA strand where it exits the tetramer. Each RuvB hexamer is contacted by two RuvA subunits (via domain III) on 2 adjacent RuvB subunits; this complex drives branch migration. In the full resolvosome a probable DNA-RuvA(4)-RuvB(12)-RuvC(2) complex forms which resolves the HJ.

Its subcellular location is the cytoplasm. Its function is as follows. The RuvA-RuvB-RuvC complex processes Holliday junction (HJ) DNA during genetic recombination and DNA repair, while the RuvA-RuvB complex plays an important role in the rescue of blocked DNA replication forks via replication fork reversal (RFR). RuvA specifically binds to HJ cruciform DNA, conferring on it an open structure. The RuvB hexamer acts as an ATP-dependent pump, pulling dsDNA into and through the RuvAB complex. HJ branch migration allows RuvC to scan DNA until it finds its consensus sequence, where it cleaves and resolves the cruciform DNA. The polypeptide is Holliday junction branch migration complex subunit RuvA (Myxococcus xanthus (strain DK1622)).